Consider the following 371-residue polypeptide: Putative F-box/kelch-repeat protein At3g10510 (371 aa).

Residues 13-61 enclose the F-box domain; that stretch reads SVMTSIPDDVIMECIAPRVPRYNHSMLSLVSKQFRSLVASPRLYKTRSL. Kelch repeat units lie at residues 123 to 165, 178 to 229, and 257 to 305; these read NIFV…DMPV, KIYI…GPSS, and NECV…YIVS.

The protein is Putative F-box/kelch-repeat protein At3g10510 of Arabidopsis thaliana (Mouse-ear cress).